A 375-amino-acid polypeptide reads, in one-letter code: FAD-dependent catabolic D-arginine dehydrogenase DauA (375 aa).

Residues Ala-14, 32–33 (ER), 41–48 (STGRSAAH), Ala-171, and 331–336 (GGYGIQ) contribute to the FAD site.

The protein belongs to the FAD-dependent glycerol-3-phosphate dehydrogenase family. Monomer. It depends on FAD as a cofactor.

It catalyses the reaction D-arginine + A + H2O = 5-guanidino-2-oxopentanoate + AH2 + NH4(+). The catalysed reaction is a D-alpha-amino acid + A + H2O = a 2-oxocarboxylate + AH2 + NH4(+). Inhibited by D-arginine and D-lysine at high concentration. Functionally, dauA is highly expressed within the cystic fibrosis (CF) lung, and it is required for virulence via the optimal production of hydrogen cyanide, pyocyanine, pyoverdine, rhamnolipid and alginate during biofilm formation. Involved in the catabolism of D-lysine and D-arginine. Under aerobic conditions, the arginine succinyltransferase (AST) and arginine transaminase (ATA) pathways are 2 major routes for L-arginine utilization as the sole source of carbon and nitrogen. The D-to-L racemization of arginine by DauA and DauB is necessary, before to be channeled into the AST and/or ATA pathways. DauA catalyzes the flavin-dependent oxidative deamination of D-arginine into 2-ketoarginine (2-KA) and ammonia. It also has dehydrogenase activity towards D-lysine, D-tyrosine, D-methionine, D-phenylalanine, D-ornithine, D-histidine and D-leucine as substrates. The polypeptide is FAD-dependent catabolic D-arginine dehydrogenase DauA (Pseudomonas aeruginosa (strain ATCC 15692 / DSM 22644 / CIP 104116 / JCM 14847 / LMG 12228 / 1C / PRS 101 / PAO1)).